Here is a 239-residue protein sequence, read N- to C-terminus: DNA repair protein RecO (239 aa).

Belongs to the RecO family.

In terms of biological role, involved in DNA repair and RecF pathway recombination. This Stenotrophomonas maltophilia (strain K279a) protein is DNA repair protein RecO.